A 449-amino-acid chain; its full sequence is MGKEKVHINIVVIGHVDSGKSTTTGHLIYKLGGIDKRVIERFEKEAAEMNKRSFKYAWVLDKLKAERERGITIDIALWKFETTKYYCTVIDAPGHRDFIKNMITGTSQADCAVLIIDSTTGGFEAGISKDGQTREHALLAFTLGVKQMICCCNKMDATTPKYSKARYDEIVKEVSSYLKKVGYNPDKIPFVPISGFEGDNMIERSTNLDWYKGPTLLEALDQIQEPKRPSDKPLRLPLQDVYKIGGIGTVPVGRVETGILKPGMVVTFGPTGLTTEVKSVEMHHEALQEALPGDNVGFNVKNVAVKDLKRGIVASNSKDDPAKEAANFTSQVIIMNHPGQIGNGYAPVLDCHTSHIAVKFAEILTKIDRRSGKELEKEPKFLKNGDAGFVKMIPTKPMVVETFSAYPPLGRFAVRDMRQTVAVGVIKSVEKKDPSGAKVTKSAAKKGGK.

The 226-residue stretch at 5-230 folds into the tr-type G domain; it reads KVHINIVVIG…DQIQEPKRPS (226 aa). Residues 14 to 21 form a G1 region; it reads GHVDSGKS. GTP is bound at residue 14-21; it reads GHVDSGKS. Lysine 55 is subject to N6,N6-dimethyllysine. Residues 70 to 74 form a G2 region; the sequence is GITID. N6,N6,N6-trimethyllysine is present on lysine 79. Residues 91-94 form a G3 region; the sequence is DAPG. GTP is bound by residues 91–95 and 153–156; these read DAPGH and NKMD. Residues 153 to 156 form a G4 region; the sequence is NKMD. Position 187 is an N6,N6,N6-trimethyllysine (lysine 187). Positions 194–196 are G5; the sequence is SGF. Lysine 261 bears the N6-methyllysine mark. Glutamate 289 carries the 5-glutamyl glycerylphosphorylethanolamine modification. Residue lysine 306 is modified to N6,N6,N6-trimethyllysine. At glutamate 362 the chain carries 5-glutamyl glycerylphosphorylethanolamine. At lysine 396 the chain carries N6,N6,N6-trimethyllysine.

The protein belongs to the TRAFAC class translation factor GTPase superfamily. Classic translation factor GTPase family. EF-Tu/EF-1A subfamily.

Its subcellular location is the cytoplasm. Its function is as follows. This protein promotes the GTP-dependent binding of aminoacyl-tRNA to the A-site of ribosomes during protein biosynthesis. The polypeptide is Elongation factor 1-alpha (EF1) (Manihot esculenta (Cassava)).